Consider the following 254-residue polypeptide: 3-deoxy-manno-octulosonate cytidylyltransferase (254 aa).

Belongs to the KdsB family.

It is found in the cytoplasm. The catalysed reaction is 3-deoxy-alpha-D-manno-oct-2-ulosonate + CTP = CMP-3-deoxy-beta-D-manno-octulosonate + diphosphate. It participates in nucleotide-sugar biosynthesis; CMP-3-deoxy-D-manno-octulosonate biosynthesis; CMP-3-deoxy-D-manno-octulosonate from 3-deoxy-D-manno-octulosonate and CTP: step 1/1. Its pathway is bacterial outer membrane biogenesis; lipopolysaccharide biosynthesis. Its function is as follows. Activates KDO (a required 8-carbon sugar) for incorporation into bacterial lipopolysaccharide in Gram-negative bacteria. The polypeptide is 3-deoxy-manno-octulosonate cytidylyltransferase (Pseudomonas syringae pv. tomato (strain ATCC BAA-871 / DC3000)).